Here is a 134-residue protein sequence, read N- to C-terminus: Two-component response regulator ORR5 (134 aa).

One can recognise a Response regulatory domain in the interval His16 to Leu133. A 4-aspartylphosphate modification is found at Asp66.

The protein belongs to the ARR family. Type-A subfamily. Post-translationally, two-component system major event consists of a His-to-Asp phosphorelay between a sensor histidine kinase (HK) and a response regulator (RR). In plants, the His-to-Asp phosphorelay involves an additional intermediate named Histidine-containing phosphotransfer protein (HPt). This multistep phosphorelay consists of a His-Asp-His-Asp sequential transfer of a phosphate group between first a His and an Asp of the HK protein, followed by the transfer to a conserved His of the HPt protein and finally the transfer to an Asp in the receiver domain of the RR protein. As to expression, expressed in mature leaves and shoots, and at low levels in roots and flowers.

In terms of biological role, functions as a response regulator involved in His-to-Asp phosphorelay signal transduction system. Phosphorylation of the Asp residue in the receiver domain activates the ability of the protein to promote the transcription of target genes. Type-A response regulators seem to act as negative regulators of the cytokinin signaling. This chain is Two-component response regulator ORR5, found in Oryza sativa subsp. indica (Rice).